The following is an 84-amino-acid chain: FMRFamide-like neuropeptides 26 (84 aa).

The N-terminal stretch at 1–19 is a signal peptide; the sequence is MKVMFMLALLFSSLVATSA. The propeptide occupies 20–48; the sequence is FRLPFQFFGANEDFNSGLTKRNYYESKPY. A phenylalanine amide mark is found at phenylalanine 61 and phenylalanine 82.

This sequence belongs to the FARP (FMRFamide related peptide) family. Each flp gene is expressed in a distinct set of neurons.

The protein resides in the secreted. Functionally, FMRFamides and FMRFamide-like peptides are neuropeptides. This Caenorhabditis elegans protein is FMRFamide-like neuropeptides 26.